Here is a 291-residue protein sequence, read N- to C-terminus: tRNA pseudouridine synthase B (291 aa).

Residue aspartate 41 is the Nucleophile of the active site.

This sequence belongs to the pseudouridine synthase TruB family. Type 1 subfamily.

It catalyses the reaction uridine(55) in tRNA = pseudouridine(55) in tRNA. In terms of biological role, responsible for synthesis of pseudouridine from uracil-55 in the psi GC loop of transfer RNAs. The protein is tRNA pseudouridine synthase B of Parasynechococcus marenigrum (strain WH8102).